A 439-amino-acid chain; its full sequence is AP-2 complex subunit mu (439 aa).

Positions Arg172 to Arg438 constitute an MHD domain.

The protein belongs to the adaptor complexes medium subunit family. In terms of assembly, adaptor protein complex 2 (AP-2) is a heterotetramer composed of two large adaptins (alpha-type and beta-type subunits), a medium adaptin (mu-type subunit AP50) and a small adaptin (sigma-type subunit AP17). Phosphorylated.

The protein localises to the cell membrane. It is found in the membrane. The protein resides in the coated pit. In terms of biological role, component of the adaptor complexes which link clathrin to receptors in coated vesicles. Clathrin-associated protein complexes are believed to interact with the cytoplasmic tails of membrane proteins, leading to their selection and concentration. AP50 is a subunit of the plasma membrane adaptor. This Dictyostelium discoideum (Social amoeba) protein is AP-2 complex subunit mu (apm2).